The primary structure comprises 397 residues: Acetate kinase (397 aa).

Asparagine 7 is a binding site for Mg(2+). Lysine 14 contacts ATP. Arginine 88 is a binding site for substrate. The Proton donor/acceptor role is filled by aspartate 145. ATP contacts are provided by residues 205–209 (HLGNG), 279–281 (DMR), and 326–330 (GIGEN). A Mg(2+)-binding site is contributed by glutamate 380.

The protein belongs to the acetokinase family. In terms of assembly, homodimer. Requires Mg(2+) as cofactor. It depends on Mn(2+) as a cofactor.

The protein resides in the cytoplasm. It carries out the reaction acetate + ATP = acetyl phosphate + ADP. Its pathway is metabolic intermediate biosynthesis; acetyl-CoA biosynthesis; acetyl-CoA from acetate: step 1/2. Catalyzes the formation of acetyl phosphate from acetate and ATP. Can also catalyze the reverse reaction. This chain is Acetate kinase, found in Campylobacter concisus (strain 13826).